Here is a 1046-residue protein sequence, read N- to C-terminus: SWI/SNF-related matrix-associated actin-dependent regulator of chromatin subfamily A member 1 (1046 aa).

The interval 27 to 61 (EQPGPSTFKEEGAAAAATEGTTATEKGEKKEKITS) is disordered. Low complexity predominate over residues 39 to 50 (AAAAATEGTTAT). 2 positions are modified to phosphoserine: Ser-120 and Ser-123. Positions 199-364 (ISLYENGVNG…WALLNFLLPD (166 aa)) constitute a Helicase ATP-binding domain. 212–219 (DEMGLGKT) provides a ligand contact to ATP. Residues 315–318 (DEAH) carry the DEAH box motif. Residues 494–645 (ALDKLLARIK…SIVIQQGRLI (152 aa)) enclose the Helicase C-terminal domain. Glycyl lysine isopeptide (Lys-Gly) (interchain with G-Cter in SUMO2) cross-links involve residues Lys-654, Lys-720, and Lys-742. Residues 819–840 (AQREEQKKIDGAEPLTPQETEE) are disordered. Residues 820-829 (QREEQKKIDG) show a composition bias toward basic and acidic residues. One can recognise an SANT 1 domain in the interval 847–899 (QGFTNWTKRDFNQFIKANEKYGRDDIDNIAREVEGKSPEEVMEYSAVFWERCN). The residue at position 946 (Tyr-946) is a Phosphotyrosine. One can recognise an SANT 2 domain in the interval 950–1014 (KGKNYTEEED…QRRCNTLISL (65 aa)). The stretch at 1003–1037 (EFQRRCNTLISLIEKENMEIEERERAEKKKRATKT) forms a coiled coil. The tract at residues 1025–1046 (RERAEKKKRATKTPMVKFSAFS) is disordered.

The protein belongs to the SNF2/RAD54 helicase family. ISWI subfamily. May form homodimers. Component of the ACF-1 ISWI chromatin remodeling complex at least composed of SMARCA1 and BAZ1A, which regulates the spacing of histone octamers on the DNA template to facilitate access to DNA. Within the complex interacts with BAZ1A; the interaction is direct. Component of the WICH-1 ISWI chromatin remodeling complex at least composed of SMARCA1 and BAZ1B/WSTF. Within the complex interacts with BAZ1B/WSTF. Component of the NoRC-1 ISWI chromatin remodeling complex at least composed of SMARCA1 and BAZ2A/TIP5. Within the complex interacts with BAZ2A/TIP5. Component of the BRF-1 ISWI chromatin remodeling complex at least composed of SMARCA1 and BAZ2B. Within the complex interacts with BAZ2B. Component of the NURF-1 ISWI chromatin remodeling complex (also called the nucleosome-remodeling factor (NURF) complex) at least composed of SMARCA1, BPTF, RBBP4 and RBBP7. Within the complex interacts with BPTF. Within the complex interacts with RBBP4 and RBBP7. Component of the CERF-1 ISWI chromatin remodeling complex (also called the CECR2-containing-remodeling factor (CERF) complex) at least composed of CECR2 and SMARCA1. LUZP1 is detected as part of the CERF-1 complex in embryonic stem cells where it is involved in complex stabilization but is not detected in the complex in the testis. Component of the RSF-1 ISWI chromatin remodeling complex at least composed of SMARCA1 and RSF1. Within the complex interacts with RSF1. Interacts with PRLR. Interacts with ERCC6. As to expression, predominantly expressed in cortex, cerebellum, ovaries, testes, uterus and placenta.

Its subcellular location is the nucleus. It carries out the reaction ATP + H2O = ADP + phosphate + H(+). ATPase that possesses intrinsic ATP-dependent chromatin-remodeling activity. ATPase activity is substrate-dependent, and is increased when nucleosomes are the substrate, but is also catalytically active when DNA alone is the substrate. Catalytic subunit of ISWI chromatin-remodeling complexes, which form ordered nucleosome arrays on chromatin and facilitate access to DNA during DNA-templated processes such as DNA replication, transcription, and repair. Within the ISWI chromatin-remodeling complexes, slides edge- and center-positioned histone octamers away from their original location on the DNA template. Catalytic activity and histone octamer sliding propensity is regulated and determined by components of the ISWI chromatin-remodeling complexes. The BAZ1A-, BAZ1B-, BAZ2A- and BAZ2B-containing ISWI chromatin-remodeling complexes regulate the spacing of nucleosomes along the chromatin and have the ability to slide mononucleosomes to the center of a DNA template. The CECR2- and RSF1-containing ISWI chromatin-remodeling complexes do not have the ability to slide mononucleosomes to the center of a DNA template. Within the NURF-1 and CERF-1 ISWI chromatin remodeling complexes, nucleosomes are the preferred substrate for its ATPase activity. Within the NURF-1 ISWI chromatin-remodeling complex, binds to the promoters of En1 and En2 to positively regulate their expression and promote brain development. May promote neurite outgrowth. May be involved in the development of luteal cells. Facilitates nucleosome assembly during DNA replication, ensuring replication fork progression and genomic stability by preventing replication stress and nascent DNA gaps. The protein is SWI/SNF-related matrix-associated actin-dependent regulator of chromatin subfamily A member 1 (Smarca1) of Mus musculus (Mouse).